Consider the following 385-residue polypeptide: MARENGESSSSWKKQAEDIKKIFEFKETLGTGAFSEVVLAEEKATGKLFAVKCIPKKALKGKESSIENEIAVLRKIKHENIVALEDIYESPNHLYLVMQLVSGGELFDRIVEKGFYTEKDASTLIRQVLDAVYYLHRMGIVHRDLKPENLLYYSQDEESKIMISDFGLSKMEGKGDVMSTACGTPGYVAPEVLAQKPYSKAVDCWSIGVIAYILLCGYPPFYDENDSKLFEQILKAEYEFDSPYWDDISDSAKDFIRNLMEKDPNKRYTCEQAARHPWIAGDTALNKNIHESVSAQIRKNFAKSKWRQAFNATAVVRHMRKLHLGSSLDSSNASVSSSLSLASQKDCLAPSTLCSFISSSSGVSGVGAERRPRPTTVTAVHSGSK.

The region spanning 23 to 279 (FEFKETLGTG…CEQAARHPWI (257 aa)) is the Protein kinase domain. ATP contacts are provided by residues 29–37 (LGTGAFSEV) and Lys52. Lys113 participates in a covalent cross-link: Glycyl lysine isopeptide (Lys-Gly) (interchain with G-Cter in SUMO2). Ser122 is modified (phosphoserine). Catalysis depends on Asp144, which acts as the Proton acceptor. Thr180 is modified (phosphothreonine; by CaMKK1 and CaMKK2). The interval 279 to 319 (IAGDTALNKNIHESVSAQIRKNFAKSKWRQAFNATAVVRHM) is autoinhibitory domain. Positions 299–320 (KNFAKSKWRQAFNATAVVRHMR) are calmodulin-binding. The Nuclear export signal motif lies at 318 to 324 (HMRKLHL). Residues 360–385 (SSGVSGVGAERRPRPTTVTAVHSGSK) are disordered. Positions 375 to 385 (TTVTAVHSGSK) are enriched in polar residues.

It belongs to the protein kinase superfamily. CAMK Ser/Thr protein kinase family. CaMK subfamily. Widely expressed. Highly and mostly expressed in polymorphonuclear leukocytes (neutrophilic and eosinophilic granulocytes) while little or no expression is observed in monocytes and lymphocytes.

Its subcellular location is the cytoplasm. The protein resides in the nucleus. It catalyses the reaction L-seryl-[protein] + ATP = O-phospho-L-seryl-[protein] + ADP + H(+). The catalysed reaction is L-threonyl-[protein] + ATP = O-phospho-L-threonyl-[protein] + ADP + H(+). With respect to regulation, activated by Ca(2+)/calmodulin. Binding of calmodulin results in conformational change that relieves intrasteric autoinhibition and allows phosphorylation of Thr-180 within the activation loop by CaMKK1 or CaMKK2. Phosphorylation of Thr-180 results in several fold increase in total activity. Unlike CaMK4, may be unable to exhibit autonomous activity after Ca(2+)/calmodulin activation. Calcium/calmodulin-dependent protein kinase that operates in the calcium-triggered CaMKK-CaMK1 signaling cascade and, upon calcium influx, activates CREB-dependent gene transcription, regulates calcium-mediated granulocyte function and respiratory burst and promotes basal dendritic growth of hippocampal neurons. In neutrophil cells, required for cytokine-induced proliferative responses and activation of the respiratory burst. Activates the transcription factor CREB1 in hippocampal neuron nuclei. May play a role in apoptosis of erythroleukemia cells. In vitro, phosphorylates transcription factor CREM isoform Beta. In Homo sapiens (Human), this protein is Calcium/calmodulin-dependent protein kinase type 1D (CAMK1D).